The primary structure comprises 398 residues: Phosphopentomutase (398 aa).

Positions 13, 290, 295, 331, 332, and 343 each coordinate Mn(2+).

It belongs to the phosphopentomutase family. Mn(2+) is required as a cofactor.

Its subcellular location is the cytoplasm. It catalyses the reaction 2-deoxy-alpha-D-ribose 1-phosphate = 2-deoxy-D-ribose 5-phosphate. The catalysed reaction is alpha-D-ribose 1-phosphate = D-ribose 5-phosphate. Its pathway is carbohydrate degradation; 2-deoxy-D-ribose 1-phosphate degradation; D-glyceraldehyde 3-phosphate and acetaldehyde from 2-deoxy-alpha-D-ribose 1-phosphate: step 1/2. Functionally, isomerase that catalyzes the conversion of deoxy-ribose 1-phosphate (dRib-1-P) and ribose 1-phosphate (Rib-1-P) to deoxy-ribose 5-phosphate (dRib-5-P) and ribose 5-phosphate (Rib-5-P), respectively. The sequence is that of Phosphopentomutase from Clostridium tetani (strain Massachusetts / E88).